The following is a 598-amino-acid chain: IQ calmodulin-binding motif-containing protein 1 (598 aa).

The segment at Met1 to Val157 is interaction with BBS1, BBS8 and BBS9. An interaction with CEP290, BBS1, BBS2, BBS4, BBS5, BBS7, BBS8 and BBS9 region spans residues Gln287–Pro598. 4 IQ domains span residues Leu294–Leu317, Pro318–Glu338, Glu387–Glu416, and Tyr417–Lys437. Residues Met336 to Leu362 adopt a coiled-coil conformation. The segment at Ala530–Pro598 is interaction with BBS1, BBS2, BBS4, BBS7, BBS8 and BBS9.

Interacts with calmodulin. Interacts with CEP290/NPHP6; IQCB1/NPHP5 and CEP290/NPHP6; are proposed to form a functional NPHP5-6 module localized to the centrosome. Interacts with ATXN10. Interacts with NPHP1, INVS, NPHP4 and RPGRIP1L; these interactions likely require additional interactors. Associates with the BBSome complex; interacts with BBS1, BBS2, BBS4, BBS5, BBS7, BBS8 and BBS9. As to expression, localized to the outer segment and connecting cilia of photoreceptor cells.

The protein localises to the cytoplasm. It localises to the cytoskeleton. The protein resides in the microtubule organizing center. Its subcellular location is the centrosome. In terms of biological role, involved in ciliogenesis. The function in an early step in cilia formation depends on its association with CEP290/NPHP6. Involved in regulation of the BBSome complex integrity, specifically for presence of BBS2 and BBS5 in the complex, and in ciliary targeting of selected BBSome cargos. May play a role in controlling entry of the BBSome complex to cilia possibly implicating CEP290/NPHP6. The sequence is that of IQ calmodulin-binding motif-containing protein 1 (Iqcb1) from Mus musculus (Mouse).